We begin with the raw amino-acid sequence, 286 residues long: Probable syntaxin-7B (286 aa).

Residues 1-257 lie on the Cytoplasmic side of the membrane; that stretch reads MTDRQPLISK…YVYKSSYRKK (257 aa). Positions 97 to 107 are enriched in basic and acidic residues; that stretch reads LSTSNKKESSH. Positions 97–160 are disordered; the sequence is LSTSNKKESS…TNNNNNNNNN (64 aa). Positions 114 to 160 are enriched in low complexity; it reads QQQQQQQNNGNSNNNGYNTRGGYNQQQQQQQQQYNDYTNNNNNNNNN. The 63-residue stretch at 185–247 folds into the t-SNARE coiled-coil homology domain; sequence NRILDERNAN…EDAVVELEKA (63 aa). The helical; Anchor for type IV membrane protein transmembrane segment at 258–278 threads the bilayer; it reads MIIFVICLLVTLVAVGIFLAI. Residues 279–286 are Vesicular-facing; the sequence is YYGVIKKK.

Belongs to the syntaxin family.

The protein localises to the membrane. This chain is Probable syntaxin-7B (syn7B), found in Dictyostelium discoideum (Social amoeba).